The sequence spans 150 residues: Arginine repressor (150 aa).

Belongs to the ArgR family.

Its subcellular location is the cytoplasm. It participates in amino-acid biosynthesis; L-arginine biosynthesis [regulation]. Functionally, regulates arginine biosynthesis genes. This Thermoanaerobacter sp. (strain X514) protein is Arginine repressor.